A 418-amino-acid chain; its full sequence is 3-isopropylmalate dehydratase large subunit (418 aa).

Residues Cys298, Cys358, and Cys361 each contribute to the [4Fe-4S] cluster site.

The protein belongs to the aconitase/IPM isomerase family. LeuC type 2 subfamily. In terms of assembly, heterodimer of LeuC and LeuD. Requires [4Fe-4S] cluster as cofactor.

The catalysed reaction is (2R,3S)-3-isopropylmalate = (2S)-2-isopropylmalate. Its pathway is amino-acid biosynthesis; L-leucine biosynthesis; L-leucine from 3-methyl-2-oxobutanoate: step 2/4. In terms of biological role, catalyzes the isomerization between 2-isopropylmalate and 3-isopropylmalate, via the formation of 2-isopropylmaleate. This chain is 3-isopropylmalate dehydratase large subunit, found in Caldanaerobacter subterraneus subsp. tengcongensis (strain DSM 15242 / JCM 11007 / NBRC 100824 / MB4) (Thermoanaerobacter tengcongensis).